Reading from the N-terminus, the 423-residue chain is MNMLGSMFSMVKPRLDDLGTDRLNYYYSTLIIMGMSLTITARQYVGSPLQCWVPAQFTKAWEQYAEDYCFVYNTYWVKPNDKVPLTVEERVSQQLIYYQWAPFIMAIEAAFFYLPVIFWSMLSTKSGINIIKLVETAQKAEGAESEERKKQIDIICRHISNNLRKRRNEEETTKMAKIQRIFGMQHGKYITNVYLVTKLIYMTNSFLQFYSTNKFLGQNDPYWGMRILDDILKGTDWEHSGNFPRIAMCDFQVRVLGNLQRYSIQCVLTLNMFNEKIFLFLYIWFLLVFFVTLFDSIFLCYNMFSSHKLVEFLQQFLDNQDQDENDEKKPEERKVYRKEQHSILLSEFCLHKFTPDIIILLKMINNHTGDIVCTEIVGRMWNEFLERDAKLVLQRFVDNDHHMETKSSSLKSEKLFEEQRSFI.

A run of 4 helical transmembrane segments spans residues 25 to 41 (YYYS…TITA), 102 to 122 (PFIM…WSML), 277 to 297 (IFLF…FDSI), and 341 to 361 (HSIL…IILL).

Belongs to the pannexin family. Heterooligomer of eat-5 and another innexin. Expressed in pharyngeal muscles.

The protein localises to the cell membrane. Its subcellular location is the cell junction. It is found in the gap junction. Functionally, structural component of the gap junctions. Required for synchronized pharyngeal muscle contractions. This is Innexin eat-5 (eat-5) from Caenorhabditis elegans.